The following is a 583-amino-acid chain: Aspartate--tRNA ligase (583 aa).

An L-aspartate-binding site is contributed by E174. An aspartate region spans residues 198 to 201 (QITK). R220 is a binding site for L-aspartate. ATP is bound by residues 220 to 222 (RDE) and Q229. Position 443 (H443) interacts with L-aspartate. E477 is an ATP binding site. R484 is an L-aspartate binding site. 529–532 (GLDR) contacts ATP.

The protein belongs to the class-II aminoacyl-tRNA synthetase family. Type 1 subfamily. Homodimer.

Its subcellular location is the cytoplasm. It carries out the reaction tRNA(Asp) + L-aspartate + ATP = L-aspartyl-tRNA(Asp) + AMP + diphosphate. Its function is as follows. Catalyzes the attachment of L-aspartate to tRNA(Asp) in a two-step reaction: L-aspartate is first activated by ATP to form Asp-AMP and then transferred to the acceptor end of tRNA(Asp). The chain is Aspartate--tRNA ligase from Streptococcus suis (strain 98HAH33).